The chain runs to 250 residues: Ribosomal RNA-processing protein 15 (250 aa).

The segment covering 1-27 (MGSKHRVDTKDKKRTRKNAEFGREKRN) has biased composition (basic and acidic residues). The tract at residues 1-101 (MGSKHRVDTK…NSKHDDGSTG (101 aa)) is disordered. Composition is skewed to acidic residues over residues 43–53 (MEGDEAEEDEQ) and 67–83 (EQSD…EDDD). S69 carries the phosphoserine modification.

Belongs to the RRP15 family.

It localises to the nucleus. It is found in the nucleolus. Its function is as follows. Constituent of pre-60S ribosomal particles. Required for large subunit rRNA maturation, in particular processing of the 27S pre-rRNA at the A3 and B1 sites to yield 5.8S and 25S rRNA. The chain is Ribosomal RNA-processing protein 15 from Saccharomyces cerevisiae (strain ATCC 204508 / S288c) (Baker's yeast).